A 962-amino-acid polypeptide reads, in one-letter code: Phosphatidylinositol 3,4,5-trisphosphate 3-phosphatase and dual-specificity protein phosphatase daf-18 (962 aa).

The segment at methionine 1–tyrosine 37 is disordered. In terms of domain architecture, Phosphatase tensin-type spans cysteine 58 to glutamate 230. Cysteine 169 acts as the Phosphocysteine intermediate in catalysis. A C2 tensin-type domain is found at leucine 234 to cysteine 530. Disordered regions lie at residues aspartate 382 to valine 416 and isoleucine 689 to aspartate 731. Basic and acidic residues predominate over residues arginine 392–proline 403. Low complexity predominate over residues threonine 692–threonine 704. Residues lysine 706–threonine 720 are compositionally biased toward basic and acidic residues.

Belongs to the PTEN phosphatase protein family. In terms of assembly, interacts (via C-terminus) with vab-1 (via kinase domain); the interaction is independent of vab-1 kinase activity. Interacts with arr-1 and mpz-1; the interaction may inhibit daf-18. Interacts (via C-terminus) with daf-2 (via kinase domain). In terms of processing, phosphorylated by vab-1 on tyrosine residues which may promote daf-18 degradation. As to expression, expressed in embryo, larvae and in adult germline (at protein level). Expressed at equal levels in the 6 vulva precursor cells (VPCs) of L2 larvae and in the descendant cells of the induced VPCs (at protein level). Expressed in the uterus (at protein level). Expressed in the Z2/Z3 germline precursors, oocytes, several amphid neurons and weakly in the nerve cord (at protein level).

The protein localises to the perikaryon. The protein resides in the cell membrane. It is found in the cell projection. Its subcellular location is the axon. It localises to the dendrite. The protein localises to the cytoplasm. The protein resides in the nucleus. It carries out the reaction a 1,2-diacyl-sn-glycero-3-phospho-(1D-myo-inositol-3,4,5-trisphosphate) + H2O = a 1,2-diacyl-sn-glycero-3-phospho-(1D-myo-inositol-4,5-bisphosphate) + phosphate. It catalyses the reaction O-phospho-L-seryl-[protein] + H2O = L-seryl-[protein] + phosphate. The enzyme catalyses O-phospho-L-threonyl-[protein] + H2O = L-threonyl-[protein] + phosphate. The catalysed reaction is O-phospho-L-tyrosyl-[protein] + H2O = L-tyrosyl-[protein] + phosphate. It carries out the reaction 1,2-dioctanoyl-sn-glycero-3-phospho-(1D-myo-inositol-3,4,5-trisphosphate) + H2O = 1,2-dioctanoyl-sn-glycero-3-phospho-(1D-myo-inositol-4,5-bisphosphate) + phosphate. It catalyses the reaction 1,2-dihexadecanoyl-sn-glycero-3-phospho-(1D-myo-inositol-3,4,5-trisphosphate) + H2O = 1,2-dihexadecanoyl-sn-glycero-3-phospho-(1D-myo-inositol-4,5-bisphosphate) + phosphate. Its function is as follows. Acts as a dual-specificity protein phosphatase, dephosphorylating tyrosine-, serine- and threonine-phosphorylated proteins. Also acts as a lipid phosphatase, removing the phosphate in the D3 position of the inositol ring from phosphatidylinositol 3,4,5-trisphosphate. By dephosphorylating PtdIns(3,4,5)P3 antagonizes PtdIns(3,4,5)P3 production by age-1/PI3K and thus, negatively regulates daf-2-mediated processes including dauer formation, longevity, fat metabolism, chemotaxis towards salt, thermotolerance and axon guidance. Similarly, promotes apoptosis during embryonic development by suppressing the recruitment of the prosurvival kinases akt-1/2 to the plasma membrane. In addition, regulates Z2/Z3 germline precursor cell cycle by maintaining them arrested at the G2 stage and by controlling their growth during L1 diapause. After sperm depletion in larvae and adult hermaphrodites, promotes germline stem cell quiescence and oocyte accumulation. By dephosphorylating ephrin-like receptor vab-1 on tyrosine residues, negatively regulates oocyte maturation downstream of vab-1 and upstream of mpk-1, independently of daf-2. Plays a role in postembryonic muscle arm extensions. Required for neurite outgrowth during AIY interneuron embryonic development. Mainly independently of daf-2, negatively regulates vulva induction probably by inhibiting mpk-1 phosphorylation. Both lipid and protein phosphatase activities are required for the regulation of vulva induction. Plays a role in gonad and germline development following the L1 diapause. This is Phosphatidylinositol 3,4,5-trisphosphate 3-phosphatase and dual-specificity protein phosphatase daf-18 from Caenorhabditis elegans.